The primary structure comprises 1353 residues: MIHSVFLLMFLLTPTESYVDVGPDSVKSACIEVDIQQTFFDKTWPRPIDVSKADGIIYPQGRTYSNITITYQGLFPYQGDHGDMYVYSAGHATGTTPQKLFVANYSQDVKQFANGFVVRIGAAANSTGTVIISPSTSATIRKIYPAFMLGSSVGNFSDGKMGRFFNHTLVLLPDGCGTLLRAFYCILEPRSGNHCPAGNSYTSFATYHTPATDCSDGNYNRNASLNSFKEYFNLRNCTFMYTYNITEDEILEWFGITQTAQGVHLFSSRYVDLYGGNMFQFATLPVYDTIKYYSIIPHSIRSIQSDRKAWAAFYVYKLQPLTFLLDFSVDGYIRRAIDCGFNDLSQLHCSYESFDVESGVYSVSSFEAKPSGSVVEQAEGVECDFSPLLSGTPPQVYNFKRLVFTNCNYNLTKLLSLFSVNDFTCSQISPAAIASNCYSSLILDYFSYPLSMKSDLSVSSAGPISQFNYKQSFSNPTCLILATVPHNLTTITKPLKYSYINKCSRFLSDDRTEVPQLVNANQYSPCVSIVPSTVWEDGDYYRKQLSPLEGGGWLVASGSTVAMTEQLQMGFGITVQYGTDTNSVCPKLEFANDTKIASQLGNCVEYSLYGVSGRGVFQNCTAVGVRQQRFVYDAYQNLVGYYSDDGNYYCLRACVSVPVSVIYDKETKTHATLFGSVACEHISSTMSQYSRSTRSMLKRRDSTYGPLQTPVGCVLGLVNSSLFVEDCKLPLGQSLCALPDTPSTLTPRSVRSVPGEMRLASIAFNHPIQVDQLNSSYFKLSIPTNFSFGVTQEYIQTTIQKVTVDCKQYVCNGFQKCEQLLREYGQFCSKINQALHGANLRQDDSVRNLFASVKSSQSSPIIPGFGGDFNLTLLEPVSISTGSRSARSAIEDLLFDKVTIADPGYMQGYDDCMQQGPASARDLICAQYVAGYKVLPPLMDVNMEAAYTSSLLGSIAGVGWTAGLSSFAAIPFAQSIFYRLNGVGITQQVLSENQKLIANKFNQALGAMQTGFTTTNEAFHKVQDAVNNNAQALSKLASELSNTFGAISASIGDIIQRLDVLEQDAQIDRLINGRLTTLNAFVAQQLVRSESAALSAQLAKDKVNECVKAQSKRSGFCGQGTHIVSFVVNAPNGLYFMHVGYYPSNHIEVVSAYGLCDAANPTNCIAPVNGYFIKTNNTRIVDEWSYTGSSFYAPEPITSLNTKYVAPQVTYQNISTNLPPPLLGNSTGIDFQDELDEFFKNVSTSIPNFGSLTQINTTLLDLTYEMLSLQQVVKALNESYIDLKELGNYTYYNKWPWYIWLGFIAGLVALALCVFFILCCTGCGTNCMGKLKCNRCCDRYEEYDLEPHKVHVH.

Residues 1-17 (MIHSVFLLMFLLTPTES) form the signal peptide. Residues 18–351 (YVDVGPDSVK…NDLSQLHCSY (334 aa)) form the BetaCoV S1-NTD domain. At 18–1296 (YVDVGPDSVK…GNYTYYNKWP (1279 aa)) the chain is on the extracellular side. N-linked (GlcNAc...) asparagine; by host glycosylation is found at asparagine 66, asparagine 104, asparagine 125, asparagine 155, asparagine 166, asparagine 222, asparagine 236, and asparagine 244. Cysteine 185 and cysteine 237 are oxidised to a cystine. Disulfide bonds link cysteine 339–cysteine 349 and cysteine 383–cysteine 407. Residues 381–587 (VECDFSPLLS…GTDTNSVCPK (207 aa)) enclose the BetaCoV S1-CTD domain. A glycan (N-linked (GlcNAc...) asparagine; by host) is linked at asparagine 410. 2 cysteine pairs are disulfide-bonded: cysteine 425–cysteine 478 and cysteine 437–cysteine 585. Asparagine 487, asparagine 592, asparagine 619, asparagine 719, asparagine 774, asparagine 785, and asparagine 870 each carry an N-linked (GlcNAc...) asparagine; by host glycan. 2 fusion peptide regions span residues 888–909 (SAIE…MQGY) and 907–929 (QGYD…AQYV). The cysteines at positions 912 and 925 are disulfide-linked. The tract at residues 994–1044 (QKLIANKFNQALGAMQTGFTTTNEAFHKVQDAVNNNAQALSKLASELSNTF) is heptad repeat 1. Positions 1023 to 1067 (QDAVNNNAQALSKLASELSNTFGAISASIGDIIQRLDVLEQDAQI) form a coiled coil. Asparagine 1176, asparagine 1213, asparagine 1225, asparagine 1241, asparagine 1256, asparagine 1277, and asparagine 1288 each carry an N-linked (GlcNAc...) asparagine; by host glycan. Positions 1246-1285 (IPNFGSLTQINTTLLDLTYEMLSLQQVVKALNESYIDLKE) are heptad repeat 2. A coiled-coil region spans residues 1258–1286 (TLLDLTYEMLSLQQVVKALNESYIDLKEL). The chain crosses the membrane as a helical span at residues 1297 to 1317 (WYIWLGFIAGLVALALCVFFI). The Cytoplasmic portion of the chain corresponds to 1318–1353 (LCCTGCGTNCMGKLKCNRCCDRYEEYDLEPHKVHVH). A KxHxx motif is present at residues 1351-1353 (HVH).

Belongs to the betacoronaviruses spike protein family. In terms of assembly, homotrimer; each monomer consists of a S1 and a S2 subunit. The resulting peplomers protrude from the virus surface as spikes. S1 interacts with murine DPP4. In terms of processing, specific enzymatic cleavages in vivo yield mature proteins. The precursor is processed into S1 and S2 by host cell furin or another cellular protease to yield the mature S1 and S2 proteins. Additionally, a second cleavage leads to the release of a fusion peptide after viral attachment to host cell receptor. The cytoplasmic Cys-rich domain is palmitoylated. Spike glycoprotein is digested within host endosomes.

It localises to the virion membrane. The protein localises to the host endoplasmic reticulum-Golgi intermediate compartment membrane. The protein resides in the host cell membrane. Its function is as follows. Attaches the virion to the cell membrane by interacting with host receptor, initiating the infection. Interacts with host DPP4 to mediate virla entry. In terms of biological role, mediates fusion of the virion and cellular membranes by acting as a class I viral fusion protein. Under the current model, the protein has at least three conformational states: pre-fusion native state, pre-hairpin intermediate state, and post-fusion hairpin state. During viral and target cell membrane fusion, the coiled coil regions (heptad repeats) assume a trimer-of-hairpins structure, positioning the fusion peptide in close proximity to the C-terminal region of the ectodomain. The formation of this structure appears to drive apposition and subsequent fusion of viral and target cell membranes. Acts as a viral fusion peptide which is unmasked following S2 cleavage occurring upon virus endocytosis. In Middle East respiratory syndrome-related coronavirus (isolate United Kingdom/H123990006/2012) (MERS-CoV), this protein is Spike glycoprotein.